A 363-amino-acid chain; its full sequence is Aminomethyltransferase (363 aa).

It belongs to the GcvT family. In terms of assembly, the glycine cleavage system is composed of four proteins: P, T, L and H.

The catalysed reaction is N(6)-[(R)-S(8)-aminomethyldihydrolipoyl]-L-lysyl-[protein] + (6S)-5,6,7,8-tetrahydrofolate = N(6)-[(R)-dihydrolipoyl]-L-lysyl-[protein] + (6R)-5,10-methylene-5,6,7,8-tetrahydrofolate + NH4(+). The glycine cleavage system catalyzes the degradation of glycine. The polypeptide is Aminomethyltransferase (Nitrosomonas europaea (strain ATCC 19718 / CIP 103999 / KCTC 2705 / NBRC 14298)).